The following is a 200-amino-acid chain: Exopolysaccharide production protein PSS (200 aa).

It belongs to the bacterial sugar transferase family.

This is Exopolysaccharide production protein PSS (pss) from Rhizobium leguminosarum bv. phaseoli.